Consider the following 154-residue polypeptide: Basic phospholipase A2 PC20 (154 aa).

An N-terminal signal peptide occupies residues 1 to 21 (MYPAHLLVLLAVCVSLLGASA). A propeptide spanning residues 22 to 27 (ISPRPL) is cleaved from the precursor. Cystine bridges form between Cys38-Cys98, Cys54-Cys143, Cys56-Cys72, Cys71-Cys125, Cys78-Cys118, Cys87-Cys111, and Cys105-Cys116. The Ca(2+) site is built by Tyr55, Ser57, and Gly59. The active site involves His75. A Ca(2+)-binding site is contributed by Asp76. Asp119 is a catalytic residue.

Belongs to the phospholipase A2 family. Group I subfamily. D49 sub-subfamily. Ca(2+) is required as a cofactor. As to expression, expressed by the venom gland.

Its subcellular location is the secreted. The enzyme catalyses a 1,2-diacyl-sn-glycero-3-phosphocholine + H2O = a 1-acyl-sn-glycero-3-phosphocholine + a fatty acid + H(+). Its function is as follows. Snake venom phospholipase A2 (PLA2) that inhibits neuromuscular transmission by blocking acetylcholine release from the nerve termini. PLA2 catalyzes the calcium-dependent hydrolysis of the 2-acyl groups in 3-sn-phosphoglycerides. In Laticauda colubrina (Yellow-lipped sea krait), this protein is Basic phospholipase A2 PC20.